Consider the following 356-residue polypeptide: MTRLTLALDVMGGDFGPSVTVPAALQALNSNSQLTLLLVGNPDAITPLLAKADSEQRSRLQIIPAQSVIASDARPSQAIRASRGSSMRMALELVKEGRAQACVSAGNTGALMGLAKLLLKPLEGIERPALVTVLPHQQKGKTVVLDLGANVDCDSTMLVQFAIMGSVLAEEVVEIPNPRVALLNIGEEEVKGLDSIRDASAVLKTIPSINYIGYLEANELLTGKTDVLVCDGFTGNVTLKTMEGVVRMFLSLLKSQGEGKKRSWWLLLLKRWLQKSLTRRFSHLNPDQYNGACLLGLRGTVIKSHGAANQRAFAVAIEQAVQAVQRQVPQRIAARLESVYPAGFELLDGGKSGTLR.

The protein belongs to the PlsX family. Homodimer. Probably interacts with PlsY.

The protein resides in the cytoplasm. It catalyses the reaction a fatty acyl-[ACP] + phosphate = an acyl phosphate + holo-[ACP]. It functions in the pathway lipid metabolism; phospholipid metabolism. Its function is as follows. Catalyzes the reversible formation of acyl-phosphate (acyl-PO(4)) from acyl-[acyl-carrier-protein] (acyl-ACP). This enzyme utilizes acyl-ACP as fatty acyl donor, but not acyl-CoA. The protein is Phosphate acyltransferase of Shigella boydii serotype 4 (strain Sb227).